We begin with the raw amino-acid sequence, 164 residues long: R-phycoerythrin alpha chain (164 aa).

2 residues coordinate (2R,3E)-phycoerythrobilin: Cys82 and Cys139.

The protein belongs to the phycobiliprotein family. Heterodimer of an alpha and a beta chain. Contains two covalently linked bilin chromophores.

It localises to the plastid. The protein resides in the chloroplast thylakoid membrane. Functionally, light-harvesting photosynthetic bile pigment-protein from the phycobiliprotein complex. In Porphyra purpurea (Red seaweed), this protein is R-phycoerythrin alpha chain (cpeA).